The chain runs to 292 residues: Elongation factor Ts (292 aa).

Residues 82–85 are involved in Mg(2+) ion dislocation from EF-Tu; sequence TDFV.

Belongs to the EF-Ts family.

It is found in the cytoplasm. In terms of biological role, associates with the EF-Tu.GDP complex and induces the exchange of GDP to GTP. It remains bound to the aminoacyl-tRNA.EF-Tu.GTP complex up to the GTP hydrolysis stage on the ribosome. This Bordetella parapertussis (strain 12822 / ATCC BAA-587 / NCTC 13253) protein is Elongation factor Ts.